We begin with the raw amino-acid sequence, 141 residues long: Large ribosomal subunit protein uL11 (141 aa).

Belongs to the universal ribosomal protein uL11 family. As to quaternary structure, part of the ribosomal stalk of the 50S ribosomal subunit. Interacts with L10 and the large rRNA to form the base of the stalk. L10 forms an elongated spine to which L12 dimers bind in a sequential fashion forming a multimeric L10(L12)X complex. In terms of processing, one or more lysine residues are methylated.

Forms part of the ribosomal stalk which helps the ribosome interact with GTP-bound translation factors. In Trichlorobacter lovleyi (strain ATCC BAA-1151 / DSM 17278 / SZ) (Geobacter lovleyi), this protein is Large ribosomal subunit protein uL11.